The chain runs to 153 residues: MYRMQLLSCIALSLALVTNSAPTSSSTKKTQLQLEHLLLDLQMILNGINNYKNPKLTRMLTFKFYMPKKATELKHLQCLEEELKPLEEVLNLAQSKNFHLRPRDLISNINVIVLELKGSETTFMCEYADETATIVEFLNRWITFCQSIISTLT.

The first 20 residues, 1–20 (MYRMQLLSCIALSLALVTNS), serve as a signal peptide directing secretion. O-linked (GalNAc...) threonine glycosylation is present at threonine 23. Cysteines 78 and 125 form a disulfide.

The protein belongs to the IL-2 family.

It localises to the secreted. In terms of biological role, cytokine produced by activated CD4-positive helper T-cells and to a lesser extend activated CD8-positive T-cells and natural killer (NK) cells that plays pivotal roles in the immune response and tolerance. Binds to a receptor complex composed of either the high-affinity trimeric IL-2R (IL2RA/CD25, IL2RB/CD122 and IL2RG/CD132) or the low-affinity dimeric IL-2R (IL2RB and IL2RG). Interaction with the receptor leads to oligomerization and conformation changes in the IL-2R subunits resulting in downstream signaling starting with phosphorylation of JAK1 and JAK3. In turn, JAK1 and JAK3 phosphorylate the receptor to form a docking site leading to the phosphorylation of several substrates including STAT5. This process leads to activation of several pathways including STAT, phosphoinositide-3-kinase/PI3K and mitogen-activated protein kinase/MAPK pathways. Functions as a T-cell growth factor and can increase NK-cell cytolytic activity as well. Promotes strong proliferation of activated B-cells and subsequently immunoglobulin production. Plays a pivotal role in regulating the adaptive immune system by controlling the survival and proliferation of regulatory T-cells, which are required for the maintenance of immune tolerance. Moreover, participates in the differentiation and homeostasis of effector T-cell subsets, including Th1, Th2, Th17 as well as memory CD8-positive T-cells. This chain is Interleukin-2 (IL2), found in Homo sapiens (Human).